The primary structure comprises 180 residues: ATP synthase subunit delta (180 aa).

It belongs to the ATPase delta chain family. In terms of assembly, F-type ATPases have 2 components, F(1) - the catalytic core - and F(0) - the membrane proton channel. F(1) has five subunits: alpha(3), beta(3), gamma(1), delta(1), epsilon(1). F(0) has three main subunits: a(1), b(2) and c(10-14). The alpha and beta chains form an alternating ring which encloses part of the gamma chain. F(1) is attached to F(0) by a central stalk formed by the gamma and epsilon chains, while a peripheral stalk is formed by the delta and b chains.

The protein resides in the cell inner membrane. Functionally, f(1)F(0) ATP synthase produces ATP from ADP in the presence of a proton or sodium gradient. F-type ATPases consist of two structural domains, F(1) containing the extramembraneous catalytic core and F(0) containing the membrane proton channel, linked together by a central stalk and a peripheral stalk. During catalysis, ATP synthesis in the catalytic domain of F(1) is coupled via a rotary mechanism of the central stalk subunits to proton translocation. In terms of biological role, this protein is part of the stalk that links CF(0) to CF(1). It either transmits conformational changes from CF(0) to CF(1) or is implicated in proton conduction. This Trichlorobacter lovleyi (strain ATCC BAA-1151 / DSM 17278 / SZ) (Geobacter lovleyi) protein is ATP synthase subunit delta.